We begin with the raw amino-acid sequence, 178 residues long: Co-chaperone protein p23-1 (178 aa).

In terms of domain architecture, CS spans 2–91 (SRHPTVKWAQ…AESKWWNRLT (90 aa)). Composition is skewed to acidic residues over residues 112–126 (DDEDKGGEGDMDFGD) and 136–155 (DTDEIGEEVAEEDGDGEGET). Positions 112–178 (DDEDKGGEGD…DEEGVNAKKD (67 aa)) are disordered. Positions 157–178 (AETKEKKIDGEKDEEGVNAKKD) are enriched in basic and acidic residues.

Belongs to the p23/wos2 family. As to quaternary structure, interacts with HSP90 in an ATP-dependent manner.

In terms of biological role, acts as a co-chaperone for HSP90. The protein is Co-chaperone protein p23-1 of Brassica napus (Rape).